Here is a 466-residue protein sequence, read N- to C-terminus: ATP synthase subunit beta (466 aa).

An ATP-binding site is contributed by Gly148–Thr155.

The protein belongs to the ATPase alpha/beta chains family. In terms of assembly, F-type ATPases have 2 components, CF(1) - the catalytic core - and CF(0) - the membrane proton channel. CF(1) has five subunits: alpha(3), beta(3), gamma(1), delta(1), epsilon(1). CF(0) has three main subunits: a(1), b(2) and c(9-12). The alpha and beta chains form an alternating ring which encloses part of the gamma chain. CF(1) is attached to CF(0) by a central stalk formed by the gamma and epsilon chains, while a peripheral stalk is formed by the delta and b chains.

It is found in the cell inner membrane. The enzyme catalyses ATP + H2O + 4 H(+)(in) = ADP + phosphate + 5 H(+)(out). Functionally, produces ATP from ADP in the presence of a proton gradient across the membrane. The catalytic sites are hosted primarily by the beta subunits. The polypeptide is ATP synthase subunit beta (Xylella fastidiosa (strain 9a5c)).